The following is an 825-amino-acid chain: Beta-glucosidase (825 aa).

The signal sequence occupies residues 1-20; it reads MLLPLYGLASFLVLSQAALV. N-linked (GlcNAc...) asparagine glycosylation is found at N21, N74, N97, N230, and N271. D299 is an active-site residue. N-linked (GlcNAc...) asparagine glycans are attached at residues N328, N335, N537, N550, N556, N578, N667, N690, N718, N733, and N761.

This sequence belongs to the glycosyl hydrolase 3 family. As to quaternary structure, homotetramer.

It carries out the reaction Hydrolysis of terminal, non-reducing beta-D-glucosyl residues with release of beta-D-glucose.. It functions in the pathway glycan metabolism; cellulose degradation. In Wickerhamomyces anomalus (Yeast), this protein is Beta-glucosidase.